We begin with the raw amino-acid sequence, 201 residues long: Ribosomal RNA large subunit methyltransferase E (201 aa).

S-adenosyl-L-methionine contacts are provided by Gly-40, Trp-42, Asp-62, Asp-78, and Asp-101. Residue Lys-141 is the Proton acceptor of the active site.

This sequence belongs to the class I-like SAM-binding methyltransferase superfamily. RNA methyltransferase RlmE family.

Its subcellular location is the cytoplasm. The enzyme catalyses uridine(2552) in 23S rRNA + S-adenosyl-L-methionine = 2'-O-methyluridine(2552) in 23S rRNA + S-adenosyl-L-homocysteine + H(+). Specifically methylates the uridine in position 2552 of 23S rRNA at the 2'-O position of the ribose in the fully assembled 50S ribosomal subunit. This chain is Ribosomal RNA large subunit methyltransferase E, found in Anaplasma marginale (strain Florida).